The primary structure comprises 173 residues: Large ribosomal subunit protein bL9 (173 aa).

Residues 150–173 (KQEDKKSLSKKLNKADEQGERAEV) form a disordered region.

Belongs to the bacterial ribosomal protein bL9 family.

Its function is as follows. Binds to the 23S rRNA. The protein is Large ribosomal subunit protein bL9 of Borreliella burgdorferi (strain ZS7) (Borrelia burgdorferi).